Here is a 343-residue protein sequence, read N- to C-terminus: Dihydroorotate dehydrogenase (quinone) (343 aa).

FMN contacts are provided by residues 65–69 (AGFDK) and Thr-89. Lys-69 is a substrate binding site. Residue 114-118 (NRMGF) participates in substrate binding. FMN is bound by residues Asn-145 and Asn-178. Asn-178 serves as a coordination point for substrate. Ser-181 acts as the Nucleophile in catalysis. Asn-183 contributes to the substrate binding site. FMN contacts are provided by Lys-215 and Thr-243. 244 to 245 (NT) lines the substrate pocket. FMN is bound by residues Gly-269, Gly-298, and 319–320 (YT).

The protein belongs to the dihydroorotate dehydrogenase family. Type 2 subfamily. As to quaternary structure, monomer. The cofactor is FMN.

Its subcellular location is the cell membrane. It carries out the reaction (S)-dihydroorotate + a quinone = orotate + a quinol. It functions in the pathway pyrimidine metabolism; UMP biosynthesis via de novo pathway; orotate from (S)-dihydroorotate (quinone route): step 1/1. In terms of biological role, catalyzes the conversion of dihydroorotate to orotate with quinone as electron acceptor. This is Dihydroorotate dehydrogenase (quinone) from Leifsonia xyli subsp. xyli (strain CTCB07).